We begin with the raw amino-acid sequence, 350 residues long: Inhibin beta E chain (350 aa).

An N-terminal signal peptide occupies residues 1–21 (MGLSNVQLWTILLWALAWVQS). Positions 22-236 (TRSACPSCGA…EPGAGRARRR (215 aa)) are excised as a propeptide. A glycan (N-linked (GlcNAc...) asparagine) is linked at asparagine 198. Cystine bridges form between cysteine 240–cysteine 248, cysteine 247–cysteine 315, cysteine 276–cysteine 347, and cysteine 280–cysteine 349.

The protein belongs to the TGF-beta family. As to quaternary structure, homodimeric or heterodimeric through association with alpha and beta subunits, linked by one or more disulfide bonds. Inhibins are heterodimers of one alpha and one beta subunit. Activins are homo- or heterodimers of beta subunits only.

It is found in the secreted. Functionally, inhibins and activins inhibit and activate, respectively, the secretion of follitropin by the pituitary gland. Inhibins/activins are involved in regulating a number of diverse functions such as hypothalamic and pituitary hormone secretion, gonadal hormone secretion, germ cell development and maturation, erythroid differentiation, insulin secretion, nerve cell survival, embryonic axial development or bone growth, depending on their subunit composition. Inhibins appear to oppose the functions of activins. Its function is as follows. Activin E is a homodimer of INHBE secreted by the liver that plays a crucial role in regulating metabolic homeostasis particularly in lipid metabolism and energy homeostasis. Plays a central role in the regulation of adipose tissue lipolysis by preventing the influx of fatty acids from adipose tissue into the liver. Mechanistically, signals via ACVR1C to activate SMAD2/3 signaling, suppressing PPARG target genes in adipose tissue, thereby reducing liver lipid content and improving glycemic control. Induces beige adipocyte formation and thermogenesis in response to cold exposure. The sequence is that of Inhibin beta E chain (Inhbe) from Rattus norvegicus (Rat).